A 197-amino-acid polypeptide reads, in one-letter code: Elongation factor Ts (197 aa).

The tract at residues 81 to 84 is involved in Mg(2+) ion dislocation from EF-Tu; the sequence is TDFV.

This sequence belongs to the EF-Ts family.

It is found in the cytoplasm. Its function is as follows. Associates with the EF-Tu.GDP complex and induces the exchange of GDP to GTP. It remains bound to the aminoacyl-tRNA.EF-Tu.GTP complex up to the GTP hydrolysis stage on the ribosome. This is Elongation factor Ts from Fervidobacterium nodosum (strain ATCC 35602 / DSM 5306 / Rt17-B1).